A 739-amino-acid polypeptide reads, in one-letter code: Phosphoribosylformylglycinamidine synthase subunit PurL (739 aa).

His54 is a catalytic residue. Residues Tyr57 and Lys96 each coordinate ATP. Glu98 contributes to the Mg(2+) binding site. Substrate is bound by residues 99–102 and Arg121; that span reads SHNH. His100 (proton acceptor) is an active-site residue. Residue Asp122 participates in Mg(2+) binding. Residue Gln245 participates in substrate binding. Asp273 contacts Mg(2+). Residue 317-319 coordinates substrate; sequence ESQ. Asp500 and Gly537 together coordinate ATP. A Mg(2+)-binding site is contributed by Asn538. Ser540 provides a ligand contact to substrate.

This sequence belongs to the FGAMS family. In terms of assembly, monomer. Part of the FGAM synthase complex composed of 1 PurL, 1 PurQ and 2 PurS subunits.

The protein resides in the cytoplasm. It catalyses the reaction N(2)-formyl-N(1)-(5-phospho-beta-D-ribosyl)glycinamide + L-glutamine + ATP + H2O = 2-formamido-N(1)-(5-O-phospho-beta-D-ribosyl)acetamidine + L-glutamate + ADP + phosphate + H(+). It participates in purine metabolism; IMP biosynthesis via de novo pathway; 5-amino-1-(5-phospho-D-ribosyl)imidazole from N(2)-formyl-N(1)-(5-phospho-D-ribosyl)glycinamide: step 1/2. Its function is as follows. Part of the phosphoribosylformylglycinamidine synthase complex involved in the purines biosynthetic pathway. Catalyzes the ATP-dependent conversion of formylglycinamide ribonucleotide (FGAR) and glutamine to yield formylglycinamidine ribonucleotide (FGAM) and glutamate. The FGAM synthase complex is composed of three subunits. PurQ produces an ammonia molecule by converting glutamine to glutamate. PurL transfers the ammonia molecule to FGAR to form FGAM in an ATP-dependent manner. PurS interacts with PurQ and PurL and is thought to assist in the transfer of the ammonia molecule from PurQ to PurL. This chain is Phosphoribosylformylglycinamidine synthase subunit PurL, found in Bacillus cereus (strain AH187).